Consider the following 303-residue polypeptide: Major fimbrium anchoring subunit FimB (303 aa).

The signal sequence occupies residues 1–22; it reads MNDAKKYIVSVLILLVAGMFGG. Residue Cys-23 is the site of N-palmitoyl cysteine attachment. A lipid anchor (S-diacylglycerol cysteine) is attached at Cys-23.

The protein belongs to the bacteroidetes fimbrillin superfamily. FimB/Mfa2 family. In terms of assembly, fimB is not part of the fimbrium itself, but anchors the fimbrium in the outer membrane. Linear, head-to-tail oligomerization of fimbrial subunits mediates assembly of the fimbrium stalk, while the minor components FimC, FimD and FimE probably form the fimbrium tip. The anchoring subunit FimB limits fimbrium length and is important for solid fimbrium attachment to the outer membrane. In its absence, the major fimbriae become very long and are easily detached from the membrane.

Its subcellular location is the cell outer membrane. In terms of biological role, anchoring subunit of the major fimbriae. Regulates fimbrial length. These filamentous pili are attached to the cell surface; they mediate biofilm formation, adhesion onto host cells and onto other bacteria that are part of the oral microbiome. Fimbriae of P.gingivalis are major virulence factors. This Porphyromonas gingivalis (strain ATCC BAA-308 / W83) protein is Major fimbrium anchoring subunit FimB.